Reading from the N-terminus, the 593-residue chain is V-type sodium ATPase catalytic subunit A (593 aa).

Residue 232–239 (GPFGAGKT) participates in ATP binding.

This sequence belongs to the ATPase alpha/beta chains family.

It catalyses the reaction 4 Na(+)(in) + ATP + H2O = 4 Na(+)(out) + ADP + phosphate + H(+). Functionally, involved in ATP-driven sodium extrusion. The protein is V-type sodium ATPase catalytic subunit A (ntpA) of Enterococcus hirae (strain ATCC 9790 / DSM 20160 / JCM 8729 / LMG 6399 / NBRC 3181 / NCIMB 6459 / NCDO 1258 / NCTC 12367 / WDCM 00089 / R).